Consider the following 183-residue polypeptide: MSIGRVVVLTGPSGVGKGTLLKAILSQHPEAFLSISATTRSPRPGEVDGQHYYFLSREEFQTKIAEQEFLEWAEFAGNLYGTPRSPVIEQVNLGRTVILEIELEGARQVRKTLPSARQVMLLPPSVEELERRIRERATEDEAAIARRLLQAQTEIGAAKEFDRCVINDQLDTAITALEAAIFS.

The 179-residue stretch at Gly-4–Phe-182 folds into the Guanylate kinase-like domain. Gly-11 to Gly-18 is an ATP binding site.

Belongs to the guanylate kinase family.

It is found in the cytoplasm. It catalyses the reaction GMP + ATP = GDP + ADP. The catalysed reaction is dZMP + ATP = dZDP + ADP. Its pathway is purine metabolism. Functionally, essential for recycling GMP and indirectly, cGMP. (Microbial infection) Catalyzes the phosphorylation of dZMP to dZDP, when the bacterium is infected by a phage that produces the substrate for the synthesis of dZTP (2- amino-2'-deoxyadenosine 5'-triphosphate), which is then used by the phage as a DNA polymerase substrate. The sequence is that of Guanylate kinase from Synechococcus elongatus (strain ATCC 33912 / PCC 7942 / FACHB-805) (Anacystis nidulans R2).